The primary structure comprises 197 residues: Nucleoside triphosphate pyrophosphatase (197 aa).

Asp72 functions as the Proton acceptor in the catalytic mechanism.

It belongs to the Maf family. It depends on a divalent metal cation as a cofactor.

The protein resides in the cytoplasm. It catalyses the reaction a ribonucleoside 5'-triphosphate + H2O = a ribonucleoside 5'-phosphate + diphosphate + H(+). It carries out the reaction a 2'-deoxyribonucleoside 5'-triphosphate + H2O = a 2'-deoxyribonucleoside 5'-phosphate + diphosphate + H(+). Its function is as follows. Nucleoside triphosphate pyrophosphatase. May have a dual role in cell division arrest and in preventing the incorporation of modified nucleotides into cellular nucleic acids. In Corynebacterium glutamicum (strain R), this protein is Nucleoside triphosphate pyrophosphatase.